The primary structure comprises 247 residues: MQTQVLFEHPLNEKMRTWLRIEFLIQQLTVNLPIVDHAGALHFFRNVSELLDVFERGEVRTELLKELNRQQRKLQTWIGVPGVDQSRIEALIQQLKAAVSVLISAPRIGQFLREDRLIALVRQRLSIPGGCCSFDLPTLHIWLHLPQAQRDSQVETWIASLNPLTQALTMVLDLIRQSAPFRKQTSLNGFYQDNGGDADLLRLNLSLDSQLYPQISGHKSRFAIRFMPLDTENGQVPERLDFELACC.

This sequence belongs to the ZapD family. Interacts with FtsZ.

The protein localises to the cytoplasm. Its function is as follows. Cell division factor that enhances FtsZ-ring assembly. Directly interacts with FtsZ and promotes bundling of FtsZ protofilaments, with a reduction in FtsZ GTPase activity. The chain is Cell division protein ZapD from Shigella flexneri.